We begin with the raw amino-acid sequence, 851 residues long: MKPMLKDFSNLLLVVLCDYVLGEAEYLLLQEPVHVALSDRTVSVGFHYLSDVNGTLRNVSVMLWEANTNRTLTTKYLLTNQAQGTLQFECFYFKEAGDYWFVMIPEVTDNGTQVPLWEKSAFLKVEWPVFHIDLNRTAKAAEGTFQVGVFTTQPLCLFPVDKPDMLVDVIFTDRLPEARASLGQPLEIRASKRTKLTQGQWVEFGCAPVGVEAYVTVMLRLLGQDSVIASTGPIDLAQKFGYKLMMAPEVTCESVLEVMVLPPPCVFVQGVLAVYKEAPKRPEERTFQVAENRLPLGERRTVFNCTLFDVGKNKYCFNFGIVKKGHFSAKECMLIQRNIETWGPWQPWSPCSTTCGDAVRERRRLCVTSFPSRPSCSGMSSETSPCSLEECAVFRPPGPSPVSPQDPVKSNNVVTVTGISLCLFIIFATVLITLWRRFGRAPKCSTPVRHNSIHSPGFRKNSDEENICELSEPRGSFSDAGDGPRGSPGDTGIPLTYRCSASAPPEDEASGSESFQSNAQKIIPPLFSYRLAQQQLKEMKKKGLTETTKVYHVSQSPLTDTVVDATASPPLDLECPEEAAASKFRIKSPFLDQPGAGTGERPPSRLDGIVPPPGCAVSPSQTLIQKSQIRSTGGRDGSSERCHSRSSLFRRTASFHETKQSRPFRERSLSALTPRQVPAYSSRMRTWDQMEDRCRPPSRSTHLLPERPEHFQGAGRTSSPLGPLSKSYTVGHPRRKPDPGDRQAGLVAGAEKMEPHRAHRGPSPSHRSASRKQSSPIFLKDSYQKVSQLSPSHFRKDKCQSFPIHPEFAFYDNTSFRLTEAEQRMLDLPGYFGSNEEDETTSTLSVEKLVI.

The signal sequence occupies residues methionine 1–alanine 24. The Extracellular portion of the chain corresponds to glutamate 25–asparagine 412. Asparagine 53, asparagine 58, asparagine 69, asparagine 110, asparagine 135, and asparagine 304 each carry an N-linked (GlcNAc...) asparagine glycan. Positions isoleucine 339–alanine 392 constitute a TSP type-1 domain. Disulfide bonds link cysteine 351–cysteine 386, cysteine 355–cysteine 391, and cysteine 366–cysteine 376. A helical membrane pass occupies residues valine 413–threonine 433. Topologically, residues leucine 434–isoleucine 851 are cytoplasmic. Serine 462 carries the phosphoserine modification. 3 disordered regions span residues serine 471 to glutamine 516, lysine 626 to serine 646, and serine 682 to isoleucine 777. Positions arginine 685 to arginine 695 are enriched in basic and acidic residues. Positions serine 765–proline 776 are enriched in polar residues.

As to quaternary structure, part of a complex composed of THSD1, PTK2/FAK1, TLN1 and VCL. Interacts with TLN1. In terms of tissue distribution, expressed in cerebral vascular endothelium.

The protein localises to the endosome membrane. It localises to the cell junction. The protein resides in the focal adhesion. Functionally, is a positive regulator of nascent focal adhesion assembly, involved in the modulation of endothelial cell attachment to the extracellular matrix. In Mus musculus (Mouse), this protein is Thrombospondin type-1 domain-containing protein 1 (Thsd1).